The following is a 464-amino-acid chain: MAVYNYDVVVLGSGPAGEGAAMNAAKAGRKVAMVDSRRQVGGNCTHLGTIPSKALRHSVRQIMQFNTNPMFRAIGEPRWFSFPDVLKSAEKVISKQVASRTGYYARNRVDLFFGTGSFADEQTVEVVCPNGVVEKLNAKHIIIATGSRPYRPADIDFHHPRVYDSDTILSLSHTPRKLIVYGAGVIGCEYASIFSGLGVLVELVDNRGQLLSFLDSEISQALSYHFSNNNITVRHNEDYERVEGLDNGVILHLKSGKKIKADALLWCNGRTGNTDKLGLENIGIKVNSRGQIEVDEAYRTSVPNIYGAGDVIGWPSLASAAHDQGRSAAGSIVDNGSWRFVNDVPTGIYTIPEISSIGKNEQELTQAKVPYEVGKAFFKSMARAQIAGEPQGMLKILFHRETLEILGVHCFGYQASEIVHIGQAVMNQPGELNNLKYFVNTTFNYPTMAEAYRVAAYDGLNRLF.

35-44 (DSRRQVGGNC) contributes to the FAD binding site.

This sequence belongs to the class-I pyridine nucleotide-disulfide oxidoreductase family. FAD is required as a cofactor.

It localises to the cytoplasm. It carries out the reaction NAD(+) + NADPH = NADH + NADP(+). Functionally, conversion of NADPH, generated by peripheral catabolic pathways, to NADH, which can enter the respiratory chain for energy generation. This is Soluble pyridine nucleotide transhydrogenase from Pseudomonas putida (strain W619).